The following is a 644-amino-acid chain: Biosynthetic arginine decarboxylase (644 aa).

At lysine 100 the chain carries N6-(pyridoxal phosphate)lysine. 282–292 (CDVGGGLAIDY) serves as a coordination point for substrate.

The protein belongs to the Orn/Lys/Arg decarboxylase class-II family. SpeA subfamily. The cofactor is Mg(2+). Pyridoxal 5'-phosphate serves as cofactor.

It catalyses the reaction L-arginine + H(+) = agmatine + CO2. Functionally, catalyzes the biosynthesis of agmatine from arginine. The polypeptide is Biosynthetic arginine decarboxylase (Gloeobacter violaceus (strain ATCC 29082 / PCC 7421)).